Consider the following 330-residue polypeptide: Aspartate--ammonia ligase (330 aa).

The protein belongs to the class-II aminoacyl-tRNA synthetase family. AsnA subfamily.

Its subcellular location is the cytoplasm. It catalyses the reaction L-aspartate + NH4(+) + ATP = L-asparagine + AMP + diphosphate + H(+). The protein operates within amino-acid biosynthesis; L-asparagine biosynthesis; L-asparagine from L-aspartate (ammonia route): step 1/1. In Shigella sonnei (strain Ss046), this protein is Aspartate--ammonia ligase.